Here is a 691-residue protein sequence, read N- to C-terminus: Large T antigen (691 aa).

Methionine 1 carries the post-translational modification N-acetylmethionine; by host. The region spanning 12–75 (ELMDLLGLER…VKVAHQPDFG (64 aa)) is the J domain. The LXCXE motif signature appears at 105–109 (LFCHE). 3 positions are modified to phosphoserine; by host: serine 114, serine 122, and serine 125. Residues 117-138 (EATADSQHSTPPKKKRKVEDPK) form a disordered region. Phosphothreonine; by host is present on threonine 126. The short motif at 127–134 (PPKKKRKV) is the Nuclear localization signal element. Residues 141 to 256 (PSDLHQFLSQ…EESIQGGLKE (116 aa)) constitute a DNA-binding region (T-ag OBD). The T-ag D1-type zinc-finger motif lies at 267–359 (TKQVSWKLIT…KRVDTLHMTR (93 aa)). Zn(2+) is bound by residues cysteine 304, cysteine 307, histidine 315, and histidine 319. Residues 402 to 562 (KMDSVIFDFL…IYLRKSLQNS (161 aa)) enclose the SF3 helicase domain. 428–435 (GPIDSGKT) is an ATP binding site. The tract at residues 634 to 670 (EDSETEDSGHGSSTESQSQCSSQVSDTSAPDSENPHS) is disordered. The segment covering 645-661 (SSTESQSQCSSQVSDTS) has biased composition (low complexity). Position 661 is a phosphoserine; by host (serine 661). Lysine 683 bears the N6-acetyllysine; by host mark. Threonine 687 is subject to Phosphothreonine; by host.

Forms homohexamers in the presence of ATP. Interacts with host HDAC1. Interacts (via LXCXE domain) with host RB1; the interaction induces the aberrant dissociation of RB1-E2F1 complex thereby disrupting RB1's activity. Interacts (via LXCXE domain) with host pRB-related proteins RBL1 and RBL2. Interacts (via C-terminus) with host TOP1 and POLA1 allowing DNA replication. Interacts with host TP53, inhibiting TP53 binding to DNA. Interacts with host preinitiation complex components TBP, TFIIA and TFIID to regulate transcription initiation. The cofactor is Mg(2+). Phosphorylated on both serine and threonine residues. Small t antigen inhibits the dephosphorylation by the AC form of PP2A. In terms of processing, O-Glycosylated near the C-terminal region. Post-translationally, acetylated by CBP in a TP53-dependent manner.

It is found in the host nucleus. The catalysed reaction is Couples ATP hydrolysis with the unwinding of duplex DNA by translocating in the 3'-5' direction.. The enzyme catalyses ATP + H2O = ADP + phosphate + H(+). Functionally, isoform large T antigen is a key early protein essential for both driving viral replication and inducing cellular transformation. Plays a role in viral genome replication by driving entry of quiescent cells into the cell cycle and by autoregulating the synthesis of viral early mRNA. Displays highly oncogenic activities by corrupting the host cellular checkpoint mechanisms that guard cell division and the transcription, replication, and repair of DNA. Participates in the modulation of cellular gene expression preceeding viral DNA replication. This step involves binding to host key cell cycle regulators retinoblastoma protein RB1/pRb and TP53. Induces the disassembly of host E2F1 transcription factors from RB1, thus promoting transcriptional activation of E2F1-regulated S-phase genes. Inhibits host TP53 binding to DNA, abrogating the ability of TP53 to stimulate gene expression. Plays the role of a TFIID-associated factor (TAF) in transcription initiation for all three RNA polymerases, by stabilizing the TBP-TFIIA complex on promoters. Initiates viral DNA replication and unwinding via interactions with the viral origin of replication. Binds two adjacent sites in the SV40 origin. The replication fork movement is facilitated by Large T antigen helicase activity. Has processive 3'-5' DNA helicase activity which requires a short 3' single-stranded region and ATP. Activates the transcription of viral late mRNA, through host TBP and TFIIA stabilization. Interferes with histone deacetylation mediated by HDAC1, leading to activation of transcription. The sequence is that of Large T antigen from BK polyomavirus (strain AS) (BKPyV).